Here is a 96-residue protein sequence, read N- to C-terminus: MLRLDLQFFASKKGVGSTKNGRDSIAKRLGAKRADGQFVTGGSILYRQRGTKIYPGLNVGRGGDDTLYAKVDGIVRFERMGRDRKKVSVYPVVKEA.

The propeptide occupies 1-9 (MLRLDLQFF).

This sequence belongs to the bacterial ribosomal protein bL27 family. The N-terminus is cleaved by ribosomal processing cysteine protease Prp.

The sequence is that of Large ribosomal subunit protein bL27 from Anoxybacillus flavithermus (strain DSM 21510 / WK1).